The following is a 171-amino-acid chain: 3-hydroxydecanoyl-[acyl-carrier-protein] dehydratase (171 aa).

His-70 is a catalytic residue.

This sequence belongs to the thioester dehydratase family. FabA subfamily. In terms of assembly, homodimer.

The protein resides in the cytoplasm. The enzyme catalyses a (3R)-hydroxyacyl-[ACP] = a (2E)-enoyl-[ACP] + H2O. The catalysed reaction is (3R)-hydroxydecanoyl-[ACP] = (2E)-decenoyl-[ACP] + H2O. It carries out the reaction (2E)-decenoyl-[ACP] = (3Z)-decenoyl-[ACP]. It participates in lipid metabolism; fatty acid biosynthesis. Functionally, necessary for the introduction of cis unsaturation into fatty acids. Catalyzes the dehydration of (3R)-3-hydroxydecanoyl-ACP to E-(2)-decenoyl-ACP and then its isomerization to Z-(3)-decenoyl-ACP. Can catalyze the dehydratase reaction for beta-hydroxyacyl-ACPs with saturated chain lengths up to 16:0, being most active on intermediate chain length. The sequence is that of 3-hydroxydecanoyl-[acyl-carrier-protein] dehydratase from Shewanella halifaxensis (strain HAW-EB4).